Consider the following 199-residue polypeptide: NAD(P)H dehydrogenase (quinone) (199 aa).

A Flavodoxin-like domain is found at Val4–Val190. Residues Ser10–Val15 and Thr78–Tyr80 contribute to the FMN site. Trp12 lines the NAD(+) pocket. A substrate-binding site is contributed by Trp98. FMN contacts are provided by residues Ser113–Gly119 and His134.

It belongs to the WrbA family. FMN is required as a cofactor.

It carries out the reaction a quinone + NADH + H(+) = a quinol + NAD(+). The catalysed reaction is a quinone + NADPH + H(+) = a quinol + NADP(+). This is NAD(P)H dehydrogenase (quinone) from Methylorubrum extorquens (strain CM4 / NCIMB 13688) (Methylobacterium extorquens).